Reading from the N-terminus, the 464-residue chain is Formin-like protein 19 (464 aa).

A disordered region spans residues Met-1–Thr-74. Residues Pro-14–Arg-70 show a composition bias toward pro residues. The region spanning Cys-68 to Lys-462 is the FH2 domain.

This sequence belongs to the formin-like family. Class-II subfamily.

The sequence is that of Formin-like protein 19 (FH19) from Arabidopsis thaliana (Mouse-ear cress).